A 393-amino-acid chain; its full sequence is Short chain dehydrogenase sirQ (393 aa).

Leucine 54 contacts NADP(+). The Proton donor role is filled by serine 233. Lysine 259 acts as the Lowers pKa of active site Tyr in catalysis. Position 286 (alanine 286) interacts with NADP(+).

It belongs to the short-chain dehydrogenases/reductases (SDR) family. Highly divergent.

It participates in mycotoxin biosynthesis. Short chain dehydrogenase; part of the gene cluster that mediates the biosynthesis of sirodesmin PL, an epipolythiodioxopiperazine (ETP) characterized by a disulfide bridged cyclic dipeptide and that acts as a phytotoxin which is involved in the blackleg didease of canola. SirD catalyzes the O-prenylation of L-tyrosine (L-Tyr) in the presence of dimethylallyl diphosphate (DMAPP) to yield 4-O-dimethylallyl-L-Tyr, and therefore represents probably the first pathway-specific enzyme in the biosynthesis of sirodesmin PL. 4-O-dimethylallyl-L-Tyr, then undergoes condensation with L-Ser in a reaction catalyzed by the non-ribosomal peptide synthase sirP to form the diketopiperazine (DKP) backbone. Further bishydroxylation of the DKP performed by the cytochrome P450 monooxygenase sirC leads to the production of the intermediate phomamide. This step is essential to form the reactive thiol group required for toxicity of sirodesmin PL. The next steps of sirodesmin biosynthesis are not well understood yet, but some predictions could be made from intermediate compounds identification. Phomamide is converted into phomalizarine via oxidation, probably by sirT. Further oxidation, methylation (by sirM or sirN) and reduction steps convert phomalizarine to deacetyl sirodesmin. Finally, acetyltransferase sirH probably acetylates deacetyl sirodesmin to produce sirodesmin PL. This Leptosphaeria maculans (Blackleg fungus) protein is Short chain dehydrogenase sirQ.